We begin with the raw amino-acid sequence, 496 residues long: Angiopoietin-2 (496 aa).

The signal sequence occupies residues 1–18 (MWQLVFLTLSCDLAVATA). Residues Asn-90, Asn-120, Asn-134, Asn-152, Asn-241, and Asn-304 are each glycosylated (N-linked (GlcNAc...) asparagine). Residues 167-249 (STNKLEKQIL…VNNSVLQKQQ (83 aa)) are a coiled coil. One can recognise a Fibrinogen C-terminal domain in the interval 275–495 (KDEQIIFRDC…ATTMMIRPAD (221 aa)). Cysteines 284 and 313 form a disulfide. Ca(2+)-binding residues include Asp-429, Asp-431, Cys-433, and Cys-435. 2 disulfides stabilise this stretch: Cys-433–Cys-435 and Cys-437–Cys-450.

In terms of assembly, interacts with TEK/TIE2, competing for the same binding site as ANGPT1. Interacts with ITGA5. Interacts with SVEP1/polydom. Interacts with THBD; this interaction significantly inhibits the generation of activated PC and TAFIa/CPB2 by the thrombin/thrombomodulin complex.

It localises to the secreted. In terms of biological role, binds to TEK/TIE2, competing for the ANGPT1 binding site, and modulating ANGPT1 signaling. Can induce tyrosine phosphorylation of TEK/TIE2 in the absence of ANGPT1. In the absence of angiogenic inducers, such as VEGF, ANGPT2-mediated loosening of cell-matrix contacts may induce endothelial cell apoptosis with consequent vascular regression. In concert with VEGF, it may facilitate endothelial cell migration and proliferation, thus serving as a permissive angiogenic signal. Involved in the regulation of lymphangiogenesis. This chain is Angiopoietin-2 (ANGPT2), found in Bos taurus (Bovine).